The chain runs to 70 residues: Brevinin-ALb (70 aa).

Positions 1–22 (MFTLKKSLLLLFFLGTINLSLC) are cleaved as a signal peptide. Positions 23–46 (EQERDADEEERRDDDEMDVEVEKR) are excised as a propeptide. The cysteines at positions 64 and 70 are disulfide-linked.

In terms of tissue distribution, expressed by the skin glands.

Its subcellular location is the secreted. Functionally, antimicrobial peptide with activity against Gram-positive and Gram-negative bacteria and against fungi. Has been tested against S.aureus (MIC=5.5 ug/mL), E.coli (MIC=6.5 ug/mL), B.dysenteriae (MIC=2.2 ug/mL), and C.albicans (MIC=7.5 ug/mL). Can regulate or mediate antimicrobial response by stimulating mast cell degranulation. Induces histamine release. Shows cytotoxicity toward solid tumor cell line HepG2. Also shows a potent hemolytic activity (LD(50)=5 ug/ml). In Amolops loloensis (Lolokou Sucker Frog), this protein is Brevinin-ALb.